A 238-amino-acid chain; its full sequence is Leucine-rich repeat-containing protein 57 (238 aa).

8 LRR repeats span residues 10–36 (LETS…LQKL), 37–62 (TANL…SFQH), 64–82 (KSFT…DIGK), 83–106 (LKKL…IGQL), 108–128 (SLRT…GLGT), 129–152 (LRQL…VAEL), 154–173 (AIEI…EVSR), and 174–199 (TPRL…ILTD).

This Danio rerio (Zebrafish) protein is Leucine-rich repeat-containing protein 57 (lrrc57).